Consider the following 310-residue polypeptide: Homocysteine S-methyltransferase (310 aa).

One can recognise a Hcy-binding domain in the interval 1–310 (MSQNNPLRAL…ADIAALKARS (310 aa)). Positions 229, 295, and 296 each coordinate Zn(2+).

In terms of assembly, monomer. The cofactor is Zn(2+).

The catalysed reaction is S-methyl-L-methionine + L-homocysteine = 2 L-methionine + H(+). Catalyzes methyl transfer from S-methylmethionine or S-adenosylmethionine (less efficient) to homocysteine, selenohomocysteine and less efficiently selenocysteine. The chain is Homocysteine S-methyltransferase (mmuM) from Escherichia coli (strain K12).